A 283-amino-acid chain; its full sequence is Non-selective voltage-gated ion channel VDAC3 (283 aa).

The residue at position 2 (C2) is an N-acetylcysteine. T4 is subject to Phosphothreonine. K12, K15, and K20 each carry N6-acetyllysine. Transmembrane regions (beta stranded) follow at residues 26 to 35 (MVKIDLRTKS) and 39 to 47 (VEFSTSGHA). A Glycyl lysine isopeptide (Lys-Gly) (interchain with G-Cter in ubiquitin) cross-link involves residue K53. The next 3 membrane-spanning stretches (beta stranded) occupy residues 54–64 (ASGNLETKYKV), 69–76 (LTFTQKWN), and 80–89 (TLGTEISLEN). At K90 the chain carries N6-acetyllysine. The chain crosses the membrane as a beta stranded span at residues 95 to 104 (LKLTLDTIFV). Residues K109 and K110 each participate in a glycyl lysine isopeptide (Lys-Gly) (interchain with G-Cter in ubiquitin) cross-link. Transmembrane regions (beta stranded) follow at residues 111 to 120 (SGKLKASYKR), 123 to 130 (FSLGSNVD), 137 to 145 (TIYGWAVLA), 150 to 158 (LAGYQMSFD), 163 to 175 (KLSQNNFALGYKA), 178 to 185 (FQLHTHVN), 189 to 198 (EFGGSIYQKV), 202 to 211 (IETSINLAWT), 218 to 227 (RFGIAAKYKL), and 231 to 238 (TSLSAKVN). The residue at position 241 (S241) is a Phosphoserine. Residues 242–244 (LIG) and 260–264 (SALID) contribute to the NAD(+) site. A run of 2 beta stranded transmembrane segments spans residues 242–251 (LIGLGYTQTL) and 254–263 (GVKLTLSALI). K266 carries the post-translational modification N6-acetyllysine; alternate. Residue K266 forms a Glycyl lysine isopeptide (Lys-Gly) (interchain with G-Cter in ubiquitin); alternate linkage. The beta stranded transmembrane segment at 273-282 (HKVGLGFELE) threads the bilayer.

It belongs to the eukaryotic mitochondrial porin family. Interacts with ARMC12 in a TBC1D21-dependent manner. Interacts with MISFA. Ubiquitinated by PRKN during mitophagy, leading to its degradation and enhancement of mitophagy. Deubiquitinated by USP30.

It is found in the mitochondrion outer membrane. The protein localises to the membrane. It catalyses the reaction chloride(in) = chloride(out). The enzyme catalyses K(+)(in) = K(+)(out). In terms of biological role, non-selective voltage-gated ion channel that mediates the transport of anions and cations through the mitochondrion outer membrane and plasma membrane. Forms a high-conducting channel with a stable open state and a voltage-induced closure with a mild preference for anions over cations. Involved in male fertility and sperm mitochondrial sheath formation. In Oryctolagus cuniculus (Rabbit), this protein is Non-selective voltage-gated ion channel VDAC3.